The chain runs to 83 residues: MQNDAGEFVDLYVPRKCSASNRIIGAKDHASIQMNVAEVDKVTGRFNGQFKTYAICGAIRRMGESDDSILRLAKADGIVSKNF.

Met-1 bears the N-acetylmethionine mark. Residue Lys-41 forms a Glycyl lysine isopeptide (Lys-Gly) (interchain with G-Cter in SUMO2) linkage. Lys-81 is subject to N6-acetyllysine.

This sequence belongs to the eukaryotic ribosomal protein eS21 family. As to quaternary structure, component of the 40S small ribosomal subunit.

Its subcellular location is the cytoplasm. It localises to the cytosol. The protein localises to the rough endoplasmic reticulum. Component of the small ribosomal subunit. The ribosome is a large ribonucleoprotein complex responsible for the synthesis of proteins in the cell. The protein is Small ribosomal subunit protein eS21 (RPS21) of Sus scrofa (Pig).